The sequence spans 468 residues: V-type proton ATPase subunit S1 (468 aa).

The signal sequence occupies residues 1 to 35 (MMAATAAAQVRAGTRWAPALCRMPWLPLMLVAAAA). Positions 36 to 228 (ATSEQQVPLV…TAVRPSRVAR (193 aa)) are excised as a propeptide. Topologically, residues 36–417 (ATSEQQVPLV…KKFSYASDCA (382 aa)) are lumenal. 8 N-linked (GlcNAc...) asparagine glycosylation sites follow: Asn167, Asn258, Asn271, Asn294, Asn301, Asn348, Asn355, and Asn404. An intrachain disulfide couples Cys369 to Cys416. A helical membrane pass occupies residues 418–438 (GFFSPGIWMGLLTSLFMLFIF). The Cytoplasmic portion of the chain corresponds to 439-468 (TYGLHMILSLKTMDRFDDHKGPTITLTQIV).

It belongs to the vacuolar ATPase subunit S1 family. In terms of assembly, accessory component of the multisubunit proton-transporting vacuolar (V)-ATPase protein pump. Interacts (via N-terminus) with ATP6AP2 (via N-terminus). Interacts with RNASEK. Interacts with TMEM106B (via C-terminus). N-glycosylated.

Its subcellular location is the endoplasmic reticulum membrane. It localises to the endoplasmic reticulum-Golgi intermediate compartment membrane. The protein localises to the cytoplasmic vesicle. It is found in the secretory vesicle. The protein resides in the synaptic vesicle membrane. Its subcellular location is the clathrin-coated vesicle membrane. In terms of biological role, accessory subunit of the proton-transporting vacuolar (V)-ATPase protein pump, which is required for luminal acidification of secretory vesicles. Guides the V-type ATPase into specialized subcellular compartments, such as neuroendocrine regulated secretory vesicles or the ruffled border of the osteoclast, thereby regulating its activity. Involved in membrane trafficking and Ca(2+)-dependent membrane fusion. May play a role in the assembly of the V-type ATPase complex. In aerobic conditions, involved in intracellular iron homeostasis, thus triggering the activity of Fe(2+) prolyl hydroxylase (PHD) enzymes, and leading to HIF1A hydroxylation and subsequent proteasomal degradation. In islets of Langerhans cells, may regulate the acidification of dense-core secretory granules. This is V-type proton ATPase subunit S1 (ATP6AP1) from Bos taurus (Bovine).